We begin with the raw amino-acid sequence, 196 residues long: Probable signal peptidase I-1 (196 aa).

The Cytoplasmic portion of the chain corresponds to 1 to 16 (MQNSPIPSPWQFIKEN). A helical membrane pass occupies residues 17 to 35 (IPLLMVALVLALLLRFFVA). At 36-196 (EPRYIPSDSM…FVPARTIINT (161 aa)) the chain is on the periplasmic side. Active-site residues include S44 and K94.

It belongs to the peptidase S26 family.

The protein localises to the cell membrane. It catalyses the reaction Cleavage of hydrophobic, N-terminal signal or leader sequences from secreted and periplasmic proteins.. The protein is Probable signal peptidase I-1 (lepB1) of Synechocystis sp. (strain ATCC 27184 / PCC 6803 / Kazusa).